The primary structure comprises 221 residues: Protein GrpE (221 aa).

The interval 1 to 83 (MEQEQKATQE…AKNCRTRSED (83 aa)) is disordered. Positions 23 to 32 (QEEKAEERGG) are enriched in basic and acidic residues. Positions 41–53 (ENLQQENTQAQQE) are enriched in low complexity.

Belongs to the GrpE family. In terms of assembly, homodimer.

The protein resides in the cytoplasm. Participates actively in the response to hyperosmotic and heat shock by preventing the aggregation of stress-denatured proteins, in association with DnaK and GrpE. It is the nucleotide exchange factor for DnaK and may function as a thermosensor. Unfolded proteins bind initially to DnaJ; upon interaction with the DnaJ-bound protein, DnaK hydrolyzes its bound ATP, resulting in the formation of a stable complex. GrpE releases ADP from DnaK; ATP binding to DnaK triggers the release of the substrate protein, thus completing the reaction cycle. Several rounds of ATP-dependent interactions between DnaJ, DnaK and GrpE are required for fully efficient folding. The protein is Protein GrpE of Geobacillus stearothermophilus (Bacillus stearothermophilus).